We begin with the raw amino-acid sequence, 118 residues long: Large ribosomal subunit protein bL20 (118 aa).

This sequence belongs to the bacterial ribosomal protein bL20 family.

In terms of biological role, binds directly to 23S ribosomal RNA and is necessary for the in vitro assembly process of the 50S ribosomal subunit. It is not involved in the protein synthesizing functions of that subunit. This is Large ribosomal subunit protein bL20 (rplT) from Aquifex aeolicus (strain VF5).